The following is a 320-amino-acid chain: Ciliary microtubule inner protein 2A (320 aa).

Belongs to the CIMIP2 family. As to quaternary structure, microtubule inner protein component of sperm flagellar doublet microtubules. In terms of tissue distribution, expressed in sperm.

It localises to the cytoplasm. The protein localises to the cytoskeleton. Its subcellular location is the flagellum axoneme. Functionally, microtubule inner protein (MIP) part of the dynein-decorated doublet microtubules (DMTs) in flagellum axoneme. Binds to the intra-tubulin interfaces. The polypeptide is Ciliary microtubule inner protein 2A (CIMIP2A) (Bos taurus (Bovine)).